Consider the following 155-residue polypeptide: Regulatory protein RecX (155 aa).

This sequence belongs to the RecX family.

It localises to the cytoplasm. Functionally, modulates RecA activity. This is Regulatory protein RecX from Pseudomonas fluorescens (strain SBW25).